The following is a 236-amino-acid chain: Leucyl/phenylalanyl-tRNA--protein transferase (236 aa).

This sequence belongs to the L/F-transferase family.

It localises to the cytoplasm. The catalysed reaction is N-terminal L-lysyl-[protein] + L-leucyl-tRNA(Leu) = N-terminal L-leucyl-L-lysyl-[protein] + tRNA(Leu) + H(+). It carries out the reaction N-terminal L-arginyl-[protein] + L-leucyl-tRNA(Leu) = N-terminal L-leucyl-L-arginyl-[protein] + tRNA(Leu) + H(+). The enzyme catalyses L-phenylalanyl-tRNA(Phe) + an N-terminal L-alpha-aminoacyl-[protein] = an N-terminal L-phenylalanyl-L-alpha-aminoacyl-[protein] + tRNA(Phe). Functions in the N-end rule pathway of protein degradation where it conjugates Leu, Phe and, less efficiently, Met from aminoacyl-tRNAs to the N-termini of proteins containing an N-terminal arginine or lysine. This is Leucyl/phenylalanyl-tRNA--protein transferase from Shewanella woodyi (strain ATCC 51908 / MS32).